The sequence spans 257 residues: Uridylate kinase (257 aa).

8–11 contacts ATP; sequence KLSG. The tract at residues 21-26 is involved in allosteric activation by GTP; the sequence is GSAGFG. G56 lines the UMP pocket. ATP contacts are provided by G57 and R61. UMP is bound by residues D75 and 136–143; that span reads NGAPFFTT. Positions 164, 170, and 173 each coordinate ATP.

The protein belongs to the UMP kinase family. As to quaternary structure, homohexamer.

The protein resides in the cytoplasm. It carries out the reaction UMP + ATP = UDP + ADP. It functions in the pathway pyrimidine metabolism; CTP biosynthesis via de novo pathway; UDP from UMP (UMPK route): step 1/1. Allosterically activated by GTP. Inhibited by UTP. Functionally, catalyzes the reversible phosphorylation of UMP to UDP. The protein is Uridylate kinase of Deinococcus geothermalis (strain DSM 11300 / CIP 105573 / AG-3a).